A 595-amino-acid chain; its full sequence is (E)-beta-ocimene synthase, chloroplastic (595 aa).

The N-terminal 32 residues, Met-1–Ser-32, are a transit peptide targeting the chloroplast. Residues Asp-350 and Asp-354 each coordinate Mn(2+). The DDXXD motif signature appears at Asp-350 to Asp-354. Homodimerization regions lie at residues Tyr-356–Leu-362 and Glu-428–Pro-465. 2 residues coordinate Mn(2+): Asn-493 and Glu-501.

It belongs to the terpene synthase family. Homodimer. Requires Mn(2+) as cofactor. It depends on Mg(2+) as a cofactor. In terms of tissue distribution, expressed in peltate glandular trichomes. Present in flowers, leaves and stems.

It is found in the plastid. The protein localises to the chloroplast. It carries out the reaction (2E)-geranyl diphosphate = (E)-beta-ocimene + diphosphate. It participates in secondary metabolite biosynthesis; terpenoid biosynthesis. Its function is as follows. Involved in the biosynthesis of monoterpenes natural products. Monoterpene synthase that catalyzes mainly the formation of (E)-beta-ocimene and minor amounts of other monoterpenes (e.g. myrcene, (Z)-beta-ocimene, alpha- and gamma-terpinene) from geranyl diphosphate (GPP). The chain is (E)-beta-ocimene synthase, chloroplastic from Origanum vulgare (Wild marjoram).